The sequence spans 164 residues: MKWKALFTAAILQAQLPITEAQSFGLLDPKLCYLLDGILFIYGVILTALFLRVKFSRSADAPAYQQGQNQLYNELNLGRREEYDVLDKRRGRDPEMGGKPQRRKNPQEGLYNELQKDKMAEAYSEIGMKGERRRGKGHDGLYQGLSTATKDTYDALHMQALPPR.

The N-terminal stretch at 1-21 (MKWKALFTAAILQAQLPITEA) is a signal peptide. The Extracellular segment spans residues 22–30 (QSFGLLDPK). Residues 31-51 (LCYLLDGILFIYGVILTALFL) traverse the membrane as a helical segment. At 52–164 (RVKFSRSADA…ALHMQALPPR (113 aa)) the chain is on the cytoplasmic side. S58 bears the Phosphoserine mark. ITAM domains are found at residues 61–89 (APAYQQGQNQLYNELNLGRREEYDVLDKR), 100–128 (PQRRKNPQEGLYNELQKDKMAEAYSEIGM), and 131–159 (ERRRGKGHDGLYQGLSTATKDTYDALHMQ). A phosphotyrosine mark is found at Y64, Y72, Y83, Y111, Y123, Y142, and Y153. The segment covering 83–96 (YDVLDKRRGRDPEM) has biased composition (basic and acidic residues). A disordered region spans residues 83 to 111 (YDVLDKRRGRDPEMGGKPQRRKNPQEGLY). Residues 128-154 (MKGERRRGKGHDGLYQGLSTATKDTYD) form a disordered region.

Belongs to the CD3Z/FCER1G family. As to quaternary structure, the TCR-CD3 complex is composed of a CD3D/CD3E and a CD3G/CD3E heterodimers that preferentially associate with TCRalpha and TCRbeta, respectively, to form TCRalpha/CD3E/CD3G and TCRbeta/CD3G/CD3E trimers. In turn, the hexamer interacts with CD3Z homodimer to form the TCR-CD3 complex. Alternatively, TCRalpha and TCRbeta can be replaced by TCRgamma and TCRdelta. Interacts with SLA. Interacts with TRAT1. Interacts with DOCK2. Interacts with SLA2. Interacts with SHB. Interacts with ZAP70. Interacts (tyrosine phosphorylated) with SHC1 (via SH2 domain). Interacts with PTPRC. Interacts with CRK; this interaction regulates CD3Z phosphorylation. Interacts (on T cell side) with CD81, ICAM1 and CD9 at immunological synapses between antigen-presenting cells and T cells. Interacts with CD160. Interacts with LY6E. The signaling subunit of immunoglobulin gamma (IgG) Fc receptor complex. As a homodimer or a heterodimer with FCER1G, associates with the ligand binding subunit FCGR3A (via transmembrane domain); this interaction is a prerequisite for Fc receptor complex expression on the cell surface. Interacts with CD5. (Microbial infection) Interacts with HIV-1 Nef; this interaction up-regulates the expression of the Fas ligand (FASLG) at the cell surface. In terms of assembly, (Microbial infection) Interacts with HIV-2 Nef protein; this interaction induces down-regulation of cell surface TCR/CD3 complexes. In terms of processing, phosphorylated on Tyr residues after T-cell receptor triggering by LCK in association with CD4/CD8. As to expression, CD3Z is expressed in normal lymphoid tissue and in peripheral blood mononuclear cells (PBMCs).

The protein resides in the cell membrane. Part of the TCR-CD3 complex present on T-lymphocyte cell surface that plays an essential role in adaptive immune response. When antigen presenting cells (APCs) activate T-cell receptor (TCR), TCR-mediated signals are transmitted across the cell membrane by the CD3 chains CD3D, CD3E, CD3G and CD3Z. All CD3 chains contain immunoreceptor tyrosine-based activation motifs (ITAMs) in their cytoplasmic domain. Upon TCR engagement, these motifs become phosphorylated by Src family protein tyrosine kinases LCK and FYN, resulting in the activation of downstream signaling pathways. CD3Z ITAMs phosphorylation creates multiple docking sites for the protein kinase ZAP70 leading to ZAP70 phosphorylation and its conversion into a catalytically active enzyme. Plays an important role in intrathymic T-cell differentiation. Additionally, participates in the activity-dependent synapse formation of retinal ganglion cells (RGCs) in both the retina and dorsal lateral geniculate nucleus (dLGN). This is T-cell surface glycoprotein CD3 zeta chain (CD247) from Homo sapiens (Human).